A 142-amino-acid chain; its full sequence is Large ribosomal subunit protein uL13 (142 aa).

The protein belongs to the universal ribosomal protein uL13 family. In terms of assembly, part of the 50S ribosomal subunit.

This protein is one of the early assembly proteins of the 50S ribosomal subunit, although it is not seen to bind rRNA by itself. It is important during the early stages of 50S assembly. This is Large ribosomal subunit protein uL13 from Idiomarina loihiensis (strain ATCC BAA-735 / DSM 15497 / L2-TR).